Reading from the N-terminus, the 150-residue chain is Ribonuclease H (150 aa).

The RNase H type-1 domain occupies 1 to 141 (MKSIEVHTDG…VDVLARNQAT (141 aa)). Residues aspartate 9, glutamate 47, aspartate 69, and aspartate 133 each contribute to the Mg(2+) site.

This sequence belongs to the RNase H family. In terms of assembly, monomer. The cofactor is Mg(2+).

The protein localises to the cytoplasm. The enzyme catalyses Endonucleolytic cleavage to 5'-phosphomonoester.. Functionally, endonuclease that specifically degrades the RNA of RNA-DNA hybrids. This is Ribonuclease H from Xanthomonas oryzae pv. oryzae (strain MAFF 311018).